Reading from the N-terminus, the 189-residue chain is Glycerol-3-phosphate acyltransferase (189 aa).

Helical transmembrane passes span 1 to 21 (MFWLLALLAYLLGSLSFAIVL), 50 to 70 (KLAILTLLGDLCKGLLPVLLA), 77 to 97 (LHAQAWVGICAVLGHLFPLYF), 111 to 131 (MLMGLYFPAALLAIGAWLLTF), and 151 to 171 (LLAWREPEALLPISVLTVMIV).

This sequence belongs to the PlsY family. As to quaternary structure, probably interacts with PlsX.

The protein localises to the cell inner membrane. It catalyses the reaction an acyl phosphate + sn-glycerol 3-phosphate = a 1-acyl-sn-glycero-3-phosphate + phosphate. It participates in lipid metabolism; phospholipid metabolism. Catalyzes the transfer of an acyl group from acyl-phosphate (acyl-PO(4)) to glycerol-3-phosphate (G3P) to form lysophosphatidic acid (LPA). This enzyme utilizes acyl-phosphate as fatty acyl donor, but not acyl-CoA or acyl-ACP. This is Glycerol-3-phosphate acyltransferase from Pseudomonas putida (strain ATCC 700007 / DSM 6899 / JCM 31910 / BCRC 17059 / LMG 24140 / F1).